The primary structure comprises 540 residues: Putative cysteine ligase BshC (540 aa).

The stretch at 425-453 (IEKVEGMIEQQRRLNKDLLDEVAGNQNNI) forms a coiled coil.

The protein belongs to the BshC family.

Involved in bacillithiol (BSH) biosynthesis. May catalyze the last step of the pathway, the addition of cysteine to glucosamine malate (GlcN-Mal) to generate BSH. The chain is Putative cysteine ligase BshC from Staphylococcus aureus (strain NCTC 8325 / PS 47).